An 88-amino-acid chain; its full sequence is Selenoprotein W (88 aa).

Residues 10 to 13 (CGAU) constitute a cross-link (cysteinyl-selenocysteine (Cys-Sec); redox-active). Residue Sec-13 is a non-standard amino acid, selenocysteine. S-glutathionyl cysteine is present on Cys-37.

This sequence belongs to the SelWTH family. Selenoprotein W subfamily. Interacts with DPYSL2, PRDX1, YWHAB, YWHAG, HSP70 and HSP90. In the embryo, expressed in the developing nervous system and in mesoderm-derived tissues such as heart and limbs. In the adult, predominantly expressed in brain, skeletal muscle and heart.

Its subcellular location is the cytoplasm. In terms of biological role, plays a role as a glutathione (GSH)-dependent antioxidant. May be involved in a redox-related process. May play a role in the myopathies of selenium deficiency. This Mus musculus (Mouse) protein is Selenoprotein W.